The primary structure comprises 507 residues: Germ cell nuclear acidic protein (507 aa).

The segment covering 1–51 (MDSGSSSSSSSSGSSSGSCSTSGSGSTSGSSTTSSSSSSSSSSSSSSSSSS) has biased composition (low complexity). Positions 1-507 (MDSGSSSSSS…GRGRGAKAGK (507 aa)) are disordered. Short sequence motifs (SUMO interaction motif 1 (SIM)) lie at residues 12-15 (SGSS), 66-69 (CVVI), 86-89 (VCEI), and 108-111 (LIVI). Basic and acidic residues-rich tracts occupy residues 122–141 (KNTK…KEGV), 179–354 (SEAK…KGEM), and 431–449 (PQDR…RGDS). The span at 480-507 (GRGRGRGRGRGRGRGRGRGRGRGAKAGK) shows a compositional bias: basic residues.

Belongs to the serine-aspartate repeat-containing protein (SDr) family. In terms of assembly, interacts (via SIM domains) with SUMO2; this interaction allows the GCNA recruitment to DPCs sites. Interacts with TOP2A; this interaction allows the resolution of topoisomerase II (TOP2A) DNA-protein cross-links. Germ-cells specific.

Its subcellular location is the chromosome. The protein localises to the nucleus. It is found in the PML body. In terms of biological role, may play a role in DNA-protein cross-links (DPCs) clearance through a SUMO-dependent recruitment to sites of DPCs, ensuring the genomic stability by protecting germ cells and early embryos from various sources of damage. Can resolve the topoisomerase II (TOP2A) DPCs. In Mus musculus (Mouse), this protein is Germ cell nuclear acidic protein.